The primary structure comprises 113 residues: UPF0122 protein SSU98_0878 (113 aa).

The protein belongs to the UPF0122 family.

Might take part in the signal recognition particle (SRP) pathway. This is inferred from the conservation of its genetic proximity to ftsY/ffh. May be a regulatory protein. This chain is UPF0122 protein SSU98_0878, found in Streptococcus suis (strain 98HAH33).